We begin with the raw amino-acid sequence, 708 residues long: F-box only protein 43 (708 aa).

The interval 35 to 55 (MSQRHSGQAGTEAGNGADSPP) is disordered. At Ser-76 the chain carries Phosphoserine. Position 234 is a phosphothreonine (Thr-234). The interval 320–426 (PSPEVRGSIS…ISEGQLSSDE (107 aa)) is disordered. A compositionally biased stretch (polar residues) spans 327-337 (SISTPEDSGFN). Ser-334 is modified (phosphoserine). Positions 374–385 (KTRHLGRSRRLS) are enriched in basic residues. Over residues 399–411 (EKQIVHPDSEKRA) the composition is skewed to basic and acidic residues. In terms of domain architecture, F-box spans 490–547 (MGIEKLDILTELKYRNLKHILAMVLESLTAESLCSVWKVSRNWREIVVQDKNANRRRK). The ZBR-type zinc finger occupies 636 to 684 (ALKPCPRCQSPAKYQPYKKRGLCSRTACGFDFCVLCLCAYHGSEECSRG). Cys-640, Cys-643, Cys-658, Cys-663, Cys-668, Cys-671, His-676, and Cys-681 together coordinate Zn(2+). Positions 682–708 (SRGAAKPRNRKDALPGSAQSKRNLKRL) are disordered.

In terms of assembly, part of a SCF (SKP1-cullin-F-box) protein ligase complex. According to PubMed:34595750 interaction with SKP1 does not occur. Interacts with ANAPC2; the interaction is direct, ANAPC4, CDC16, CDC23; the interaction is direct, ANAPC10; the interaction is direct and CDC26, during spermatogenesis. May interact with CDC20. In terms of processing, phosphorylated on Ser-76, Thr-234 and Ser-334 in response to calcium, which is a prerequisite for ubiquitination and proteasomal degradation. Post-translationally, ubiquitinated in response to calcium, which promotes proteasomal degradation. Expressed in the testis.

It functions in the pathway protein modification; protein ubiquitination. In terms of biological role, required to establish and maintain the arrest of oocytes at the second meiotic metaphase until fertilization. Acts by inhibiting the anaphase-promoting complex/cyclosome (APC/C) ubiquitin ligase. Probably recognizes and binds to some phosphorylated proteins and promotes their ubiquitination and degradation. Plays a vital role in modulating the ubiquitilation of CCNB1 and CDK1 during gametogenesis. The protein is F-box only protein 43 (FBXO43) of Homo sapiens (Human).